Here is a 939-residue protein sequence, read N- to C-terminus: Tyrosine-protein kinase Shark (939 aa).

Residues 10-106 (WYHGNLSREA…GLPTKLTVPL (97 aa)) enclose the SH2 1 domain. 3 ANK repeats span residues 153-185 (DGQTALHLAALHSDEDILKHLLNAKVQVNSSDS), 186-218 (FGCQPLHYAARSKPASFIRTLISAQANVQGRNI), and 220-252 (NGYVPLHEAAKHGNLEAVQELLLAEAPPLPRTS). Residues 288-403 (WYHGTLTREE…GLPVSLKYPV (116 aa)) enclose the SH2 2 domain. Disordered regions lie at residues 410–446 (EVPSFATIPRSNMKPKAASPATPPTPVSPHSHHQHPH) and 476–505 (ALFDMNSLRKNKSKGKRSDSESSVSGSLAG). Residues 496–505 (ESSVSGSLAG) show a composition bias toward polar residues. Residues 662-921 (LVLDREIGHG…PTFVYLTEFF (260 aa)) enclose the Protein kinase domain. Residues 668-676 (IGHGEFGSV) and Lys698 contribute to the ATP site. The active-site Proton acceptor is the Asp789. Residue Tyr927 is modified to Phosphotyrosine.

It belongs to the protein kinase superfamily. Tyr protein kinase family. In terms of assembly, interacts with drpr; this is required for the recruitment of drpr and glial cells to severed axons and for the phagocytosis of axonal debris by glial cells following axon injury. Gastrulation embryos show expression in ectodermal cells along the cephalic furrow and ventral midline. Proctodeum, stomodeum and their derived structures (foregut, atrium, pharynx, esophagus and hindgut) continue to show expression from stage 8-9 to late embryos. Other ectodermally derived structures (frontal sac, salivary gland and labium) and developing tracheal system also show expression.

The protein localises to the cytoplasm. It catalyses the reaction L-tyrosyl-[protein] + ATP = O-phospho-L-tyrosyl-[protein] + ADP + H(+). Functionally, following axon injury, required for recruitment of drpr and glial cells to severed axons and for glial clearance of severed axons from the central nervous system. Together with Src42a and drpr, promotes the migration of macrophages to sites of wounding as part of a signaling cascade where Scr42a detects production of hydrogen peroxide at wound sites which triggers phosphorylation of drpr and subsequent recruitment and activation of shark. May be involved in signal transduction on the apical surface of ectodermal epithelial cells, regulating their polarity during invagination. Crumbs (crb) may be the intracellular signal. This is Tyrosine-protein kinase Shark from Drosophila melanogaster (Fruit fly).